A 357-amino-acid chain; its full sequence is GDSL esterase/lipase At5g45950 (357 aa).

The first 23 residues, 1–23 (MLLVAFVTLLVAVALQPLPSVLS), serve as a signal peptide directing secretion. Asn37 carries an N-linked (GlcNAc...) asparagine glycan. The active-site Nucleophile is the Ser47. Asn132 is a glycosylation site (N-linked (GlcNAc...) asparagine). Residues Asp331 and His334 contribute to the active site.

Belongs to the 'GDSL' lipolytic enzyme family.

It is found in the secreted. This Arabidopsis thaliana (Mouse-ear cress) protein is GDSL esterase/lipase At5g45950.